Here is a 459-residue protein sequence, read N- to C-terminus: Glycosyl hydrolase family 109 protein (459 aa).

Positions M1–A31 form a signal peptide, tat-type signal. NAD(+)-binding positions include E64–R65, D86, W135–H138, E155–V156, and N184. Substrate-binding positions include Y213, R232, Y244 to H247, and Y326. Y244 serves as a coordination point for NAD(+).

Belongs to the Gfo/Idh/MocA family. Glycosyl hydrolase 109 subfamily. The cofactor is NAD(+). Predicted to be exported by the Tat system. The position of the signal peptide cleavage has not been experimentally proven.

Its function is as follows. Glycosidase. In Shewanella sp. (strain W3-18-1), this protein is Glycosyl hydrolase family 109 protein.